Here is a 713-residue protein sequence, read N- to C-terminus: Mitochondrial intermediate peptidase (713 aa).

The transit peptide at 1–35 directs the protein to the mitochondrion; sequence MLCVGRLGGLGARAAALPPRRAGRGILEAGIRARR. The residue at position 126 (Lys126) is an N6-acetyllysine. Residue His495 coordinates Zn(2+). Glu496 is an active-site residue. Positions 499 and 502 each coordinate Zn(2+).

It belongs to the peptidase M3 family. As to quaternary structure, monomer. It depends on Zn(2+) as a cofactor.

It is found in the mitochondrion matrix. The enzyme catalyses Release of an N-terminal octapeptide as second stage of processing of some proteins imported into the mitochondrion.. With respect to regulation, activity is divalent cation-dependent. It is stimulated by manganese, magnesium or calcium ions and reversibly inhibited by zinc, cobalt and iron. Its function is as follows. Cleaves proteins, imported into the mitochondrion, to their mature size. In Pongo abelii (Sumatran orangutan), this protein is Mitochondrial intermediate peptidase (MIPEP).